The sequence spans 228 residues: ATP synthase subunit a (228 aa).

6 helical membrane-spanning segments follow: residues 14–34 (YFLLMPMTLASMLMAISWLFF), 71–91 (WVPIITTVFILLFSVNVLGLL), 101–121 (ISLTYSIGIPIWMSVNILGFY), 139–159 (FLLPLMVIIETLSLFAQPIAL), 165–185 (ANLTAGHLLIYLMSTAIWVLM), and 188–208 (VAIASITLIIFILLFLLEIGV).

Belongs to the ATPase A chain family. In terms of assembly, F-type ATPases have 2 components, CF(1) - the catalytic core - and CF(0) - the membrane proton channel. CF(1) has five subunits: alpha(3), beta(3), gamma(1), delta(1), epsilon(1). CF(0) has three main subunits: a, b and c.

The protein resides in the mitochondrion inner membrane. In terms of biological role, mitochondrial membrane ATP synthase (F(1)F(0) ATP synthase or Complex V) produces ATP from ADP in the presence of a proton gradient across the membrane which is generated by electron transport complexes of the respiratory chain. F-type ATPases consist of two structural domains, F(1) - containing the extramembraneous catalytic core and F(0) - containing the membrane proton channel, linked together by a central stalk and a peripheral stalk. During catalysis, ATP synthesis in the catalytic domain of F(1) is coupled via a rotary mechanism of the central stalk subunits to proton translocation. Key component of the proton channel; it may play a direct role in the translocation of protons across the membrane. This is ATP synthase subunit a (ATP6) from Pisaster ochraceus (Ochre sea star).